Reading from the N-terminus, the 178-residue chain is Nicotinamide-nucleotide adenylyltransferase (178 aa).

It belongs to the archaeal NMN adenylyltransferase family.

The protein resides in the cytoplasm. The catalysed reaction is beta-nicotinamide D-ribonucleotide + ATP + H(+) = diphosphate + NAD(+). Its pathway is cofactor biosynthesis; NAD(+) biosynthesis; NAD(+) from nicotinamide D-ribonucleotide: step 1/1. This Pyrobaculum arsenaticum (strain DSM 13514 / JCM 11321 / PZ6) protein is Nicotinamide-nucleotide adenylyltransferase.